The primary structure comprises 118 residues: Large ribosomal subunit protein mL53 (118 aa).

The disordered stretch occupies residues 99 to 118; that stretch reads AAAASAPGADKVAPGTSTRR.

Belongs to the mitochondrion-specific ribosomal protein mL53 family. Component of the mitochondrial ribosome large subunit (39S) which comprises a 16S rRNA and about 50 distinct proteins.

The protein localises to the mitochondrion. The chain is Large ribosomal subunit protein mL53 (Mrpl53) from Mus musculus (Mouse).